The sequence spans 327 residues: Tagatose 1,6-diphosphate aldolase 2 (327 aa).

Belongs to the aldolase LacD family.

It carries out the reaction D-tagatofuranose 1,6-bisphosphate = D-glyceraldehyde 3-phosphate + dihydroxyacetone phosphate. The protein operates within carbohydrate metabolism; D-tagatose 6-phosphate degradation; D-glyceraldehyde 3-phosphate and glycerone phosphate from D-tagatose 6-phosphate: step 2/2. This Streptococcus pyogenes serotype M1 protein is Tagatose 1,6-diphosphate aldolase 2 (lacD2).